The sequence spans 314 residues: 2,3-dihydroxyphenylpropionate/2,3-dihydroxicinnamic acid 1,2-dioxygenase (314 aa).

Catalysis depends on His-115, which acts as the Proton donor. His-179 serves as the catalytic Proton acceptor.

Belongs to the LigB/MhpB extradiol dioxygenase family. Homotetramer. It depends on Fe(2+) as a cofactor.

The catalysed reaction is 3-(2,3-dihydroxyphenyl)propanoate + O2 = (2Z,4E)-2-hydroxy-6-oxonona-2,4-dienedioate + H(+). The enzyme catalyses (2E)-3-(2,3-dihydroxyphenyl)prop-2-enoate + O2 = (2Z,4E,7E)-2-hydroxy-6-oxonona-2,4,7-trienedioate + H(+). It functions in the pathway aromatic compound metabolism; 3-phenylpropanoate degradation. Catalyzes the non-heme iron(II)-dependent oxidative cleavage of 2,3-dihydroxyphenylpropionic acid and 2,3-dihydroxicinnamic acid into 2-hydroxy-6-ketononadienedioate and 2-hydroxy-6-ketononatrienedioate, respectively. This Escherichia coli O157:H7 protein is 2,3-dihydroxyphenylpropionate/2,3-dihydroxicinnamic acid 1,2-dioxygenase.